We begin with the raw amino-acid sequence, 200 residues long: Ciliary microtubule inner protein 2C (200 aa).

Belongs to the CIMIP2 family. As to quaternary structure, microtubule inner protein component of sperm flagellar doublet microtubules.

Its subcellular location is the cytoplasm. The protein resides in the cytoskeleton. It is found in the cilium axoneme. It localises to the flagellum axoneme. In terms of biological role, microtubule inner protein (MIP) part of the dynein-decorated doublet microtubules (DMTs) in cilia axoneme, which is required for motile cilia beating. Binds to the intra-tubulin interfaces. The sequence is that of Ciliary microtubule inner protein 2C (Cimip2c) from Mus musculus (Mouse).